We begin with the raw amino-acid sequence, 343 residues long: Histone H1.8 (343 aa).

A compositionally biased stretch (low complexity) spans 1–32; that stretch reads MAPGSIASSDTSSSTSSSSTSSASSASAEGSS. 2 disordered regions span residues 1–50 and 122–343; these read MAPG…VRAP and ATGS…EAEG. Positions 52–130 constitute an H15 domain; sequence RHPPVLRMVL…GATGSFKLVP (79 aa). Positions 132–142 are enriched in basic residues; the sequence is DKRKIPPRKTA. Basic and acidic residues-rich tracts occupy residues 150–183, 199–219, and 235–247; these read EGKDPKKPSESKKDPANTVEVKKGSRKPREERAA, QTKDPEPRLGEAKKSSRRPDK, and KVKERGSRQADTK. Positions 161 to 176 match the Nuclear localization signal motif; the sequence is KKDPANTVEVKKGSRK. The segment covering 253–265 has biased composition (polar residues); sequence QPGSQSSKSTVTK.

The protein belongs to the histone H1/H5 family. In terms of tissue distribution, oocyte (at protein level).

It is found in the cytoplasm. Its subcellular location is the nucleus. The protein localises to the chromosome. In terms of biological role, may play a key role in the control of gene expression during oogenesis and early embryogenesis, presumably through the perturbation of chromatin structure. Essential for meiotic maturation of germinal vesicle-stage oocytes. The somatic type linker histone H1c is rapidly replaced by H1oo in a donor nucleus transplanted into an oocyte. The greater mobility of H1oo as compared to H1c may contribute to this rapid replacement and increased instability of the embryonic chromatin structure. The rapid replacement of H1c with H1oo may play an important role in nuclear remodeling. This Bos taurus (Bovine) protein is Histone H1.8.